We begin with the raw amino-acid sequence, 342 residues long: GTPase Obg (342 aa).

Positions 1 to 159 constitute an Obg domain; the sequence is MKFLDEAKVY…HWLWLRLKLI (159 aa). An OBG-type G domain is found at 160–327; sequence ADAGLVGLPN…ALRALMAAMD (168 aa). Residues 166-173, 191-195, 212-215, 279-282, and 308-310 contribute to the GTP site; these read GLPNAGKS, FTTLH, DIPG, SKAD, and SAA. Mg(2+)-binding residues include S173 and T193.

It belongs to the TRAFAC class OBG-HflX-like GTPase superfamily. OBG GTPase family. As to quaternary structure, monomer. It depends on Mg(2+) as a cofactor.

It localises to the cytoplasm. Its function is as follows. An essential GTPase which binds GTP, GDP and possibly (p)ppGpp with moderate affinity, with high nucleotide exchange rates and a fairly low GTP hydrolysis rate. Plays a role in control of the cell cycle, stress response, ribosome biogenesis and in those bacteria that undergo differentiation, in morphogenesis control. This Methylobacterium nodulans (strain LMG 21967 / CNCM I-2342 / ORS 2060) protein is GTPase Obg.